The sequence spans 236 residues: uncharacterized protein (236 aa).

This is an uncharacterized protein from Aquifex aeolicus (strain VF5).